The sequence spans 1004 residues: NADH:acrylate oxidoreductase (1004 aa).

Residue Thr-455 is modified to FMN phosphoryl threonine. Positions 508, 527, 535, 536, 540, 541, and 775 each coordinate FAD. The active-site Proton donor is Arg-834. 4 residues coordinate FAD: His-941, Glu-970, Ala-985, and Leu-986.

This sequence belongs to the FAD-dependent oxidoreductase 2 family. FRD/SDH subfamily. FAD is required as a cofactor. FMN serves as cofactor. In terms of processing, is flavinylated on Thr-455 by ApbE, encoded in a neighboring gene. Flavinylation is essential for catalytic activity.

It carries out the reaction acrylate + NADH + H(+) = propanoate + NAD(+). Catalyzes the NADH-dependent reduction of acrylate to propanoate. The principal role of ARD in Vibrio seems to be the energy-saving detoxification of acrylate coming from the environment. May also use acrylate as the terminal electron acceptor for NADH regeneration at oxygen deficiency. NADPH cannot replace NADH as the electron donor. Is also able to reduce methacrylate in vitro, but with a much lower efficiency. This Vibrio harveyi (Beneckea harveyi) protein is NADH:acrylate oxidoreductase.